Here is a 397-residue protein sequence, read N- to C-terminus: tRNA-specific 2-thiouridylase MnmA (397 aa).

Residues 19-26 (AMSGGVDS) and L45 contribute to the ATP site. C113 serves as the catalytic Nucleophile. A disulfide bridge links C113 with C210. G137 lines the ATP pocket. The interval 160 to 162 (RDQ) is interaction with tRNA. C210 acts as the Cysteine persulfide intermediate in catalysis.

This sequence belongs to the MnmA/TRMU family.

It is found in the cytoplasm. It catalyses the reaction S-sulfanyl-L-cysteinyl-[protein] + uridine(34) in tRNA + AH2 + ATP = 2-thiouridine(34) in tRNA + L-cysteinyl-[protein] + A + AMP + diphosphate + H(+). Catalyzes the 2-thiolation of uridine at the wobble position (U34) of tRNA, leading to the formation of s(2)U34. In Bradyrhizobium sp. (strain ORS 278), this protein is tRNA-specific 2-thiouridylase MnmA.